A 438-amino-acid polypeptide reads, in one-letter code: MRVFIDEIARHVDQEVELRGWLYQRRSKGKIHFLILRDGTGFLQATVVQGEVPEAVFREADHLPQETALRVWGRVREDRRAPGGFELAVRDLQVVSRPQGEYPIGPKEHGIDFLMDHRHLWLRHRRPFAVMRIRDELERAIHEFFGERGFLRFDAPILTPSAVEGTTELFEVELFDGEKAYLSQSGQLYAEAGALAFAKVYTFGPTFRAERSKTRRHLLEFWMVEPEVAFMTHEENMALQEELVSFLVARVLERRSRELEMLGRDPKALEPAAEGHYARLTYKEAVALVNRIAQEDPEVPPLPYGEDFGAPHEAALSRRFDRPVFVERYPARIKAFYMEPDPEDPELVLNDDLLAPEGYGEIIGGSQRIHDLELLRRKIQEFGLPEEVYDWYLDLRRFGSVPHSGFGLGLERTVAWICGLAHVREAIPFPRMYTRMRP.

It belongs to the class-II aminoacyl-tRNA synthetase family. Homodimer.

It localises to the cytoplasm. It catalyses the reaction tRNA(Asn) + L-asparagine + ATP = L-asparaginyl-tRNA(Asn) + AMP + diphosphate + H(+). This is Asparagine--tRNA ligase from Thermus thermophilus (strain ATCC BAA-163 / DSM 7039 / HB27).